The chain runs to 302 residues: tRNA demethylase abh1 (302 aa).

Substrate is bound by residues Trp142 and 149–151 (YDW). The 113-residue stretch at 187–299 (KAEAAIVNFY…RVNFNVRQVR (113 aa)) folds into the Fe2OG dioxygenase domain. 194–196 (NFY) contacts 2-oxoglutarate. His205 and Asp207 together coordinate Fe cation. Substrate is bound at residue Arg235. His261 contributes to the Fe cation binding site. Position 290–296 (290–296 (RVNFNVR)) interacts with 2-oxoglutarate.

It belongs to the alkB family. Fe(2+) is required as a cofactor.

The protein localises to the cytoplasm. Its subcellular location is the nucleus. It carries out the reaction an N(1)-methyladenosine in tRNA + 2-oxoglutarate + O2 = an adenosine in tRNA + formaldehyde + succinate + CO2. It catalyses the reaction N(1)-methyladenosine(58) in tRNA + 2-oxoglutarate + O2 = adenosine(58) in tRNA + formaldehyde + succinate + CO2. Its function is as follows. Dioxygenase that acts as on nucleic acids, such as DNA and tRNA. Requires molecular oxygen, alpha-ketoglutarate and iron. Mainly acts as a tRNA demethylase by removing N(1)-methyladenine from various tRNAs, with a preference for N(1)-methyladenine at position 58 (m1A58) present on a stem loop structure of tRNAs. Acts as a regulator of translation initiation and elongation. Does not appear to possess DNA repair activity; no activity towards methylated DNA or etheno adducts. Exhibits a weak and unstable DNA lyase activity; this activity is probably not biologically significant and proceeds by a mechanism different from the classical dioxygenase reaction as it does not require 2-oxoglutarate or iron. The protein is tRNA demethylase abh1 (abh1) of Schizosaccharomyces pombe (strain 972 / ATCC 24843) (Fission yeast).